The sequence spans 152 residues: MSLVIPEKFQHILRIMNTNIDGKRKVGIAMTAIKGVGRRYSNIVLKKADVDLTKRAGECTEEEVDKVVTIISNPLQYKVPNWFLNRQKDIIDGKYWQLTSSNLDSKLRDDLERLKKIRSHRGLRHYWGLRVRGQHTKTTGRRGRTVGVSKKK.

A Phosphoserine modification is found at Ser-41.

Belongs to the universal ribosomal protein uS13 family.

The protein resides in the cytoplasm. Functionally, located at the top of the head of the 40S subunit, it contacts several helices of the 18S rRNA. In Drosophila melanogaster (Fruit fly), this protein is Small ribosomal subunit protein uS13 (RpS18).